Here is a 275-residue protein sequence, read N- to C-terminus: Shikimate dehydrogenase (NADP(+)) (275 aa).

Residues 15 to 17 (SKS) and Thr-62 contribute to the shikimate site. Residue Lys-66 is the Proton acceptor of the active site. Glu-78 is a binding site for NADP(+). Asn-87 and Asp-102 together coordinate shikimate. Residues 128-132 (GAGGA), 151-156 (NRTAEK), and Leu-218 contribute to the NADP(+) site. Tyr-220 lines the shikimate pocket. Gly-241 is a binding site for NADP(+).

The protein belongs to the shikimate dehydrogenase family. Homodimer.

The enzyme catalyses shikimate + NADP(+) = 3-dehydroshikimate + NADPH + H(+). The protein operates within metabolic intermediate biosynthesis; chorismate biosynthesis; chorismate from D-erythrose 4-phosphate and phosphoenolpyruvate: step 4/7. In terms of biological role, involved in the biosynthesis of the chorismate, which leads to the biosynthesis of aromatic amino acids. Catalyzes the reversible NADPH linked reduction of 3-dehydroshikimate (DHSA) to yield shikimate (SA). The sequence is that of Shikimate dehydrogenase (NADP(+)) from Shouchella clausii (strain KSM-K16) (Alkalihalobacillus clausii).